Reading from the N-terminus, the 263-residue chain is Ribonuclease HII (263 aa).

An RNase H type-2 domain is found at 71 to 262; sequence QAIAGIDEVG…VKSMCCDSTN (192 aa). A divalent metal cation is bound by residues Asp77, Glu78, and Asp172.

This sequence belongs to the RNase HII family. Mn(2+) serves as cofactor. It depends on Mg(2+) as a cofactor.

The protein localises to the cytoplasm. It catalyses the reaction Endonucleolytic cleavage to 5'-phosphomonoester.. Functionally, endonuclease that specifically degrades the RNA of RNA-DNA hybrids. The polypeptide is Ribonuclease HII (Streptococcus pyogenes serotype M4 (strain MGAS10750)).